The sequence spans 213 residues: Uridine kinase (213 aa).

15-22 (GASASGKS) provides a ligand contact to ATP.

The protein belongs to the uridine kinase family.

The protein resides in the cytoplasm. It carries out the reaction uridine + ATP = UMP + ADP + H(+). It catalyses the reaction cytidine + ATP = CMP + ADP + H(+). It participates in pyrimidine metabolism; CTP biosynthesis via salvage pathway; CTP from cytidine: step 1/3. The protein operates within pyrimidine metabolism; UMP biosynthesis via salvage pathway; UMP from uridine: step 1/1. The sequence is that of Uridine kinase from Cronobacter sakazakii (strain ATCC BAA-894) (Enterobacter sakazakii).